Here is a 198-residue protein sequence, read N- to C-terminus: FMN-dependent NADH:quinone oxidoreductase (198 aa).

Residues serine 10, 16-18, 94-97, and 138-141 each bind FMN; these read SQS, MYNF, and TRGG.

This sequence belongs to the azoreductase type 1 family. As to quaternary structure, homodimer. FMN serves as cofactor.

The catalysed reaction is 2 a quinone + NADH + H(+) = 2 a 1,4-benzosemiquinone + NAD(+). It catalyses the reaction N,N-dimethyl-1,4-phenylenediamine + anthranilate + 2 NAD(+) = 2-(4-dimethylaminophenyl)diazenylbenzoate + 2 NADH + 2 H(+). In terms of biological role, quinone reductase that provides resistance to thiol-specific stress caused by electrophilic quinones. Its function is as follows. Also exhibits azoreductase activity. Catalyzes the reductive cleavage of the azo bond in aromatic azo compounds to the corresponding amines. The sequence is that of FMN-dependent NADH:quinone oxidoreductase from Shewanella baltica (strain OS223).